The sequence spans 230 residues: MDYIQMLFTASILSLGYLVFICGKKKKPKPTASTESVSPLNEPKPPPQSAVPQKPAAPAAEEKAPVDPKDPKSKDVDEAKKPDPANSKKSNKSKKPEKGSKKSKKSEKSKKKKTEEKVMSEDKPERPDKLTEEEKPDAKEKKEIEKEKTKEKEKTKEKEKTQEKEKSKDETVPKQHAPSLKRQEGDKNPEITNPIVTPETDEFPTIDEDAEKTKKTEKKDVKTEGTLKKN.

A helical membrane pass occupies residues 7–23; that stretch reads LFTASILSLGYLVFICG. The tract at residues 27 to 230 is disordered; it reads KPKPTASTES…VKTEGTLKKN (204 aa). Residues 50–59 are compositionally biased toward low complexity; that stretch reads AVPQKPAAPA. The span at 60-83 shows a compositional bias: basic and acidic residues; it reads AEEKAPVDPKDPKSKDVDEAKKPD. The segment covering 101–112 has biased composition (basic residues); sequence KKSKKSEKSKKK. Residues 113–173 show a composition bias toward basic and acidic residues; it reads KTEEKVMSED…KEKSKDETVP (61 aa). A compositionally biased stretch (acidic residues) spans 199–210; the sequence is ETDEFPTIDEDA. A compositionally biased stretch (basic and acidic residues) spans 211-230; it reads EKTKKTEKKDVKTEGTLKKN.

It localises to the membrane. This is an uncharacterized protein from Caenorhabditis elegans.